The chain runs to 456 residues: UDP-N-acetylmuramoylalanine--D-glutamate ligase (456 aa).

Position 121–127 (121–127 (GTNGKTT)) interacts with ATP.

This sequence belongs to the MurCDEF family.

The protein resides in the cytoplasm. It catalyses the reaction UDP-N-acetyl-alpha-D-muramoyl-L-alanine + D-glutamate + ATP = UDP-N-acetyl-alpha-D-muramoyl-L-alanyl-D-glutamate + ADP + phosphate + H(+). It functions in the pathway cell wall biogenesis; peptidoglycan biosynthesis. Its function is as follows. Cell wall formation. Catalyzes the addition of glutamate to the nucleotide precursor UDP-N-acetylmuramoyl-L-alanine (UMA). The chain is UDP-N-acetylmuramoylalanine--D-glutamate ligase from Desulfotalea psychrophila (strain LSv54 / DSM 12343).